Here is a 460-residue protein sequence, read N- to C-terminus: uncharacterized protein (460 aa).

One can recognise a TRAM domain in the interval 8–66; the sequence is PVEKNEFIDVVFEDLTHDGAGVAKVKGYPIFVKNGLPGEEAQIKIIKVKKNFAFGRLMK. 4 residues coordinate [4Fe-4S] cluster: Cys79, Cys85, Cys88, and Cys166. Residues Gln290, Tyr319, Glu340, and Asp388 each coordinate S-adenosyl-L-methionine. The Nucleophile role is filled by Cys415.

The protein belongs to the class I-like SAM-binding methyltransferase superfamily. RNA M5U methyltransferase family.

This is an uncharacterized protein from Bacillus cereus (strain ATCC 10987 / NRS 248).